A 347-amino-acid polypeptide reads, in one-letter code: tRNA N6-adenosine threonylcarbamoyltransferase (347 aa).

Residues His117 and His121 each coordinate Fe cation. Substrate is bound by residues 140 to 144 (LVSGG), Asp174, Gly187, Asp191, and Asn281. Asp309 contacts Fe cation.

This sequence belongs to the KAE1 / TsaD family. Fe(2+) serves as cofactor.

The protein resides in the cytoplasm. The enzyme catalyses L-threonylcarbamoyladenylate + adenosine(37) in tRNA = N(6)-L-threonylcarbamoyladenosine(37) in tRNA + AMP + H(+). In terms of biological role, required for the formation of a threonylcarbamoyl group on adenosine at position 37 (t(6)A37) in tRNAs that read codons beginning with adenine. Is involved in the transfer of the threonylcarbamoyl moiety of threonylcarbamoyl-AMP (TC-AMP) to the N6 group of A37, together with TsaE and TsaB. TsaD likely plays a direct catalytic role in this reaction. This Thermobifida fusca (strain YX) protein is tRNA N6-adenosine threonylcarbamoyltransferase.